Reading from the N-terminus, the 198-residue chain is Probable molybdenum cofactor guanylyltransferase (198 aa).

Residues 9–11 (LAG), Lys-22, Asp-66, and Asp-95 contribute to the GTP site. A Mg(2+)-binding site is contributed by Asp-95.

The protein belongs to the MobA family. Requires Mg(2+) as cofactor.

It is found in the cytoplasm. It catalyses the reaction Mo-molybdopterin + GTP + H(+) = Mo-molybdopterin guanine dinucleotide + diphosphate. In terms of biological role, transfers a GMP moiety from GTP to Mo-molybdopterin (Mo-MPT) cofactor (Moco or molybdenum cofactor) to form Mo-molybdopterin guanine dinucleotide (Mo-MGD) cofactor. The chain is Probable molybdenum cofactor guanylyltransferase from Clostridium perfringens (strain SM101 / Type A).